Reading from the N-terminus, the 274-residue chain is Thiamine kinase (274 aa).

This sequence belongs to the thiamine kinase family.

The enzyme catalyses thiamine + ATP = thiamine phosphate + ADP + H(+). Its pathway is cofactor biosynthesis; thiamine diphosphate biosynthesis; thiamine phosphate from thiamine: step 1/1. Catalyzes the ATP-dependent phosphorylation of thiamine to thiamine phosphate. Is involved in thiamine salvage. In Salmonella typhimurium (strain LT2 / SGSC1412 / ATCC 700720), this protein is Thiamine kinase.